The chain runs to 472 residues: SURF6 homolog gldi-11 (472 aa).

4 disordered regions span residues 53 to 73, 89 to 232, 249 to 350, and 414 to 472; these read LSKK…AKGL, KSKQ…SPEI, KVER…DRAL, and LVKK…GRIL. The span at 95 to 106 shows a compositional bias: low complexity; that stretch reads KVQPQKVVAPVK. Residues 107–132 show a composition bias toward basic and acidic residues; that stretch reads RPADQNKNKEKVVKKDQKKQDKKADS. Residues 133-150 show a composition bias toward acidic residues; that stretch reads DSEEDDSSDDEEKEETDE. The span at 151-160 shows a compositional bias: basic and acidic residues; the sequence is PVAKKQKKEE. 2 stretches are compositionally biased toward acidic residues: residues 161 to 175 and 182 to 194; these read SSDD…EEPE and EAED…EEEE. A compositionally biased stretch (polar residues) spans 197–210; that stretch reads SKPNKTVAQSTLKS. Basic and acidic residues predominate over residues 212–221; the sequence is GKIDKEIQKL. Residues 274 to 285 show a composition bias toward basic residues; sequence LKRRESKLKLKQ. Over residues 286–305 the composition is skewed to basic and acidic residues; that stretch reads RRAEEKKGKEAAAQVKKETV. Over residues 414–426 the composition is skewed to basic residues; sequence LVKKNKMKDRRKQ. Residues 427–443 show a composition bias toward basic and acidic residues; it reads KWENRENKTEGEKQTKQ. The span at 459 to 472 shows a compositional bias: basic residues; the sequence is KRKMNKLRNKGRIL.

Belongs to the SURF6 family.

The protein localises to the nucleus. It localises to the nucleoplasm. Functionally, binds to both DNA and RNA in vitro, with a stronger binding capacity for RNA. May represent a nucleolar constitutive protein involved in ribosomal biosynthesis or assembly. This chain is SURF6 homolog gldi-11, found in Caenorhabditis elegans.